Reading from the N-terminus, the 60-residue chain is Large ribosomal subunit protein eL37 (60 aa).

Zn(2+)-binding residues include C19, C22, C34, and C37. The segment at 19–37 adopts a C4-type zinc-finger fold; sequence CRRCGRMSYHKRHKICSSC.

The protein belongs to the eukaryotic ribosomal protein eL37 family. It depends on Zn(2+) as a cofactor.

Its function is as follows. Binds to the 23S rRNA. This chain is Large ribosomal subunit protein eL37, found in Methanospirillum hungatei JF-1 (strain ATCC 27890 / DSM 864 / NBRC 100397 / JF-1).